A 340-amino-acid chain; its full sequence is Dof zinc finger protein DOF2.2 (340 aa).

The tract at residues 12-33 is disordered; it reads PPINWPQSANPNNHPHHHQLQE. A Dof-type zinc finger spans residues 94–148; the sequence is LKCPRCDSANTKFCYFNNYNLTQPRHFCKACRRYWTRGGALRNVPVGGGCRRNKK. The Zn(2+) site is built by Cys-96, Cys-99, Cys-121, and Cys-124. Disordered regions lie at residues 138 to 180 and 301 to 340; these read PVGG…TSNV and GNISRPVSGLTSPGNQSNQYWTGQGLPGSSSNDHHHQHLM. The span at 151-165 shows a compositional bias: low complexity; that stretch reads SGNSKSSSSSQNKQS. Composition is skewed to polar residues over residues 166-180 and 309-331; these read TSMVNATSPTNTSNV and GLTSPGNQSNQYWTGQGLPGSSS.

The protein localises to the nucleus. In terms of biological role, transcription factor that binds specifically to a 5'-AA[AG]G-3' consensus core sequence. This Arabidopsis thaliana (Mouse-ear cress) protein is Dof zinc finger protein DOF2.2 (DOF2.2).